Consider the following 106-residue polypeptide: UPF0145 protein NE1032 (106 aa).

This sequence belongs to the UPF0145 family.

In Nitrosomonas europaea (strain ATCC 19718 / CIP 103999 / KCTC 2705 / NBRC 14298), this protein is UPF0145 protein NE1032.